Consider the following 63-residue polypeptide: Beta-defensin 35 (63 aa).

Positions 1-23 are cleaved as a signal peptide; the sequence is MPQTFFVFCFLFFVFLQLFPGTG. Disulfide bonds link C31–C58, C38–C52, and C42–C59.

Belongs to the beta-defensin family. In terms of tissue distribution, expressed in testis, epididymis (caput, corpus and cauda), kidney and neonatal and adult brain.

It is found in the secreted. Has antibacterial activity. The polypeptide is Beta-defensin 35 (Defb35) (Mus musculus (Mouse)).